Consider the following 864-residue polypeptide: MTSFEIRQMWIKFFASKNHHIEKSFSLIPRNEDNLLWVNAGITPLKKYFDGTQTPSFRRITNVQKCIRTKDIKNVGKTSRHHTFFEMLGNFSIGNYFKKEAIHYAFELLTSPKWFGFPLEKLYITYFFQDQDTYQYWLDLGVNKNHLIHLKDNFWQIGPGPSGPCTEIFFDRGKTFDPRNKELIIEDLENDRFIEIWNIVFSQYNCDPKLPIEKYQELPSKNIDTGAGLERLACILQNTKTNFETDLFFPLIKALEKMTQITYTGQESFKIIADHLKTLVFAINDGAVLTNEKRGYVLKKLLRRAANEGKKLGLEKPFLYKLVPPTVAMMKDFYKELCTNQEMIAKVLLQQENIFEKTLKTAEKTFLQHLTQNTLSGKNFFKLYDTYGIPENLILDYAKKKNITTDYQKFQELLHEQQNLSKKNQTSQTNMNKQEEAFLHFLTPSEFIGYTNFACKTKVIKVFDEGIVLEKTPFYANMGGQIEDEGWIDNNKVTKITKLPNGQILHEFKGNFCEGQEVYACIDKTKRKQISYHHTATHLLEVVLQKQLGNHIKKQGSSVGFSSLRYDFNHFEKITPQTLLQIEKEVNQLIQKRVPVKIEQLSIQDAQKKYATLLEQNQKAKYKDKVRIVNIDTFSVDLCGGTHATNTKDLEHFTILSYESISSGIYRIEAVCNKNCQESLNAKLAPYQNELHQLTQKAKSLQTQNLDFEIKKFPPITKSYQDIINYQKHIKTQQQALVLFEKKVLEHHQKKMIQAESNFLPPQINKKMMLTIKEEKPLEVIKFFMNHIFYKYHLEVLFLSYVQPEKIVFLCQSKTLHAGNLIKEGVSLACGSGGGNASLAQGGTKKTQNLEKMLNFVKNKLKIN.

Zn(2+) contacts are provided by H534, H538, C639, and H643.

It belongs to the class-II aminoacyl-tRNA synthetase family. Requires Zn(2+) as cofactor.

The protein resides in the cytoplasm. It carries out the reaction tRNA(Ala) + L-alanine + ATP = L-alanyl-tRNA(Ala) + AMP + diphosphate. Its function is as follows. Catalyzes the attachment of alanine to tRNA(Ala) in a two-step reaction: alanine is first activated by ATP to form Ala-AMP and then transferred to the acceptor end of tRNA(Ala). Also edits incorrectly charged Ser-tRNA(Ala) and Gly-tRNA(Ala) via its editing domain. This is Alanine--tRNA ligase from Aster yellows witches'-broom phytoplasma (strain AYWB).